The chain runs to 405 residues: ATP phosphoribosyltransferase regulatory subunit (405 aa).

This sequence belongs to the class-II aminoacyl-tRNA synthetase family. HisZ subfamily. In terms of assembly, heteromultimer composed of HisG and HisZ subunits.

It localises to the cytoplasm. It functions in the pathway amino-acid biosynthesis; L-histidine biosynthesis; L-histidine from 5-phospho-alpha-D-ribose 1-diphosphate: step 1/9. In terms of biological role, required for the first step of histidine biosynthesis. May allow the feedback regulation of ATP phosphoribosyltransferase activity by histidine. In Microcystis aeruginosa (strain NIES-843 / IAM M-2473), this protein is ATP phosphoribosyltransferase regulatory subunit.